An 82-amino-acid chain; its full sequence is Cysteine proteinase inhibitor A (82 aa).

Belongs to the cystatin family.

Functionally, strong inhibitor of papain and ficin but poor inhibitor of cathepsin H, B and L. The sequence is that of Cysteine proteinase inhibitor A from Helianthus annuus (Common sunflower).